The sequence spans 361 residues: D-alanine--D-alanine ligase (361 aa).

Residues K139–N336 form the ATP-grasp domain. Residue E167–N222 participates in ATP binding. D296, E307, and N309 together coordinate Mg(2+).

This sequence belongs to the D-alanine--D-alanine ligase family. Mg(2+) serves as cofactor. Mn(2+) is required as a cofactor.

It is found in the cytoplasm. The enzyme catalyses 2 D-alanine + ATP = D-alanyl-D-alanine + ADP + phosphate + H(+). Its pathway is cell wall biogenesis; peptidoglycan biosynthesis. In terms of biological role, cell wall formation. The chain is D-alanine--D-alanine ligase from Thermosipho melanesiensis (strain DSM 12029 / CIP 104789 / BI429).